Reading from the N-terminus, the 202-residue chain is Putative scarecrow-like protein 16 (202 aa).

The tract at residues 1-26 is VHIID; sequence MQIPTLIDSMANKLHKKPPPLLKLTV. Residues 1–202 form the GRAS domain; sequence MQIPTLIDSM…RVERLEPKSR (202 aa). Residues 45–82 are leucine repeat II (LRII); the sequence is ELGSKLVNFATTRNVAMEFRIISSSYSDGLSSLIEQLR. The interval 92 to 184 is PFYRE; sequence LVVNCHMMLH…EADISWKIDN (93 aa). Positions 187-202 are SAW; it reads AKEGAERVERLEPKSR.

It belongs to the GRAS family. As to expression, expressed in seedlings, leaves and flowers.

It is found in the nucleus. In terms of biological role, probable transcription factor involved in plant development. The protein is Putative scarecrow-like protein 16 (SCL16) of Arabidopsis thaliana (Mouse-ear cress).